A 311-amino-acid chain; its full sequence is Urease accessory protein UreD (311 aa).

It belongs to the UreD family. As to quaternary structure, ureD, UreF and UreG form a complex that acts as a GTP-hydrolysis-dependent molecular chaperone, activating the urease apoprotein by helping to assemble the nickel containing metallocenter of UreC. The UreE protein probably delivers the nickel.

Its subcellular location is the cytoplasm. Its function is as follows. Required for maturation of urease via the functional incorporation of the urease nickel metallocenter. This chain is Urease accessory protein UreD, found in Parasynechococcus marenigrum (strain WH8102).